We begin with the raw amino-acid sequence, 2912 residues long: Fibrillin-2 (2912 aa).

The signal sequence occupies residues 1 to 28; the sequence is MGRRRRLCLQLYFLWLGCVVLWAQGTAG. The tract at residues 27–52 is disordered; it reads AGQPQPPPPKPPRPQPPPQQVRSATA. A propeptide spanning residues 29-77 is cleaved from the precursor; that stretch reads QPQPPPPKPPRPQPPPQQVRSATAGSEGGFLAPEYREEGAAVASRVRRR. Residues 30 to 45 are compositionally biased toward pro residues; the sequence is PQPPPPKPPRPQPPPQ. EGF-like domains are found at residues 111–142, 145–176, and 176–208; these read IVPI…STCG, SIQQ…TYCG, and GQPV…PQCE. 9 disulfides stabilise this stretch: C115–C124, C119–C130, C132–C141, C149–C159, C153–C164, C166–C175, C180–C190, C184–C196, and C198–C207. The interval 149-359 is interaction with MFAP4; that stretch reads CSVRCMNGGT…VTSTDGSRCI (211 aa). The TB 1 domain occupies 214 to 266; sequence GPCFTQVNNQMCQGQLTGIVCTKTLCCATIGRAWGHPCEMCPAQPQPCRRGFI. Positions 276-317 constitute an EGF-like 4; calcium-binding domain; it reads DVDECQAIPGICQGGNCINTVGSFECRCPAGHKQSETTQKCE. Cystine bridges form between C280–C292, C287–C301, C303–C316, C322–C334, C329–C343, and C345–C358. The O-linked (Glc) serine glycan is linked to S298. Residues 318 to 359 enclose the EGF-like 5; calcium-binding domain; the sequence is DIDECSIIPGICETGECSNTVGSYFCVCPRGYVTSTDGSRCI. The O-linked (Glc) serine glycan is linked to S340. The 54-residue stretch at 364–417 folds into the TB 2 domain; it reads GMCFSGLVNGRCAQELPGRMTKMQCCCEPGRCWGIGTIPEACPVRGSEEYRRLC. N492 carries an N-linked (GlcNAc...) asparagine glycan. Residues 494–534 form the EGF-like 6 domain; the sequence is TIDICKHHANLCLNGRCIPTVSSYRCECNMGYKQDANGDCI. Disulfide bonds link C498/C510, C505/C519, C521/C533, C539/C549, C544/C558, C560/C573, C579/C591, C586/C600, C602/C615, C621/C632, C627/C641, C643/C656, C662/C673, C668/C682, and C684/C697. O-linked (Glc) serine glycosylation is present at S516. Residues 535–574 form the EGF-like 7; calcium-binding domain; the sequence is DVDECTSNPCTNGDCVNTPGSYYCKCHAGFQRTPTKQACI. A glycan (O-linked (Glc) serine) is linked at S555. Residues 575-616 enclose the EGF-like 8; calcium-binding domain; it reads DIDECIQNGVLCKNGRCVNTDGSFQCICNAGFELTTDGKNCV. An O-linked (Glc) serine glycan is attached at S597. The region spanning 617-657 is the EGF-like 9; calcium-binding domain; that stretch reads DHDECTTTNMCLNGMCINEDGSFKCICKPGFVLAPNGRYCT. The O-linked (Glc) serine glycan is linked to S638. An EGF-like 10; calcium-binding domain is found at 658–698; that stretch reads DVDECQTPGICMNGHCINSEGSFRCDCPPGLAVGMDGRVCV. O-linked (Glc) serine glycosylation occurs at S679. Residues 704–756 enclose the TB 3 domain; that stretch reads STCYGGIKKGVCVRPFPGAVTKSECCCANPDYGFGEPCQPCPAKNSAEFHGLC. One can recognise an EGF-like 11; calcium-binding domain in the interval 768 to 809; it reads DINECALDPDICANGICENLRGSYRCNCNSGYEPDASGRNCI. 9 disulfide bridges follow: C772-C784, C779-C793, C795-C808, C814-C826, C821-C835, C837-C850, C856-C866, C861-C875, and C877-C890. The region spanning 810–851 is the EGF-like 12; calcium-binding domain; it reads DIDECLVNRLLCDNGLCRNTPGSYSCTCPPGYVFRTETETCE. An O-linked (Glc) serine glycan is attached at S832. The EGF-like 13; calcium-binding domain occupies 852-891; that stretch reads DINECESNPCVNGACRNNLGSFNCECSPGSKLSSTGLICI. S872 is a glycosylation site (O-linked (Glc) serine). In terms of domain architecture, TB 4 spans 896–947; that stretch reads GTCWLNIQDSRCEVNINGATLKSECCATLGAAWGSPCERCELDTACPRGLAR. The 42-residue stretch at 955–996 folds into the EGF-like 14; calcium-binding domain; that stretch reads DVNECEVFPGVCPNGRCVNSKGSFHCECPEGLTLDGTGRVCL. Cystine bridges form between C959-C971, C966-C980, and C982-C995. An O-linked (Glc) serine glycan is attached at S977. The 52-residue stretch at 1001-1052 folds into the TB 5 domain; sequence EQCYLKWDEDECIHPVPGKFRMDACCCAVGAAWGTECEECPKPGTKEYETLC. The EGF-like 15; calcium-binding domain maps to 1073-1114; sequence DINECKAFPGMCTYGKCRNTIGSFKCRCNSGFALDMEERNCT. Cystine bridges form between C1077–C1089, C1084–C1098, C1100–C1113, C1119–C1131, C1126–C1140, C1142–C1156, C1162–C1174, C1169–C1183, C1185–C1198, C1204–C1216, C1211–C1225, C1227–C1240, C1246–C1257, C1253–C1266, C1268–C1281, C1287–C1299, C1294–C1308, C1310–C1323, C1329–C1341, C1336–C1350, C1352–C1365, C1371–C1384, C1378–C1393, C1395–C1406, C1412–C1425, C1419–C1434, C1436–C1447, C1453–C1465, C1460–C1474, C1476–C1489, C1495–C1506, C1501–C1515, C1517–C1530, C1536–C1547, C1542–C1556, and C1558–C1571. The O-linked (Glc) serine glycan is linked to S1095. The N-linked (GlcNAc...) asparagine glycan is linked to N1112. One can recognise an EGF-like 16; calcium-binding domain in the interval 1115–1157; the sequence is DIDECRISPDLCGSGICVNTPGSFECECFEGYESGFMMMKNCM. The EGF-like 17; calcium-binding domain maps to 1158–1199; that stretch reads DIDECERNPLLCRGGTCVNTEGSFQCDCPLGHELSPSREDCV. S1180 is a glycosylation site (O-linked (Glc) serine). Residues 1200–1241 form the EGF-like 18; calcium-binding domain; that stretch reads DINECSLSDNLCRNGKCVNMIGTYQCSCNPGYQATPDRQGCT. Residue T1222 is glycosylated (O-linked (Glc) threonine). In terms of domain architecture, EGF-like 19; calcium-binding spans 1242–1282; the sequence is DIDECMIMNGGCDTQCTNSEGSYECSCSEGYALMPDGRSCA. O-linked (Glc) serine glycosylation occurs at S1263. Positions 1283 to 1324 constitute an EGF-like 20; calcium-binding domain; that stretch reads DIDECENNPDICDGGQCTNIPGEYRCLCYDGFMASMDMKTCI. The region spanning 1325–1366 is the EGF-like 21; calcium-binding domain; that stretch reads DVNECDLNSNICMFGECENTKGSFICHCQLGYSVKKGTTGCT. The O-linked (Glc) serine glycan is linked to S1347. One can recognise an EGF-like 22; calcium-binding domain in the interval 1367 to 1407; that stretch reads DVDECEIGAHNCDMHASCLNIPGSFKCSCREGWIGNGIKCI. S1390 carries O-linked (Glc) serine glycosylation. The EGF-like 23; calcium-binding domain occupies 1408-1448; the sequence is DLDECSNGTHQCSINAQCVNTPGSYRCACSEGFTGDGFTCS. An N-linked (GlcNAc...) asparagine glycan is attached at N1414. Residues 1449 to 1490 enclose the EGF-like 24; calcium-binding domain; sequence DVDECAENINLCENGQCLNVPGAYRCECEMGFTPASDSRSCQ. An EGF-like 25; calcium-binding domain is found at 1491-1531; sequence DIDECSFQNICVFGTCNNLPGMFHCICDDGYELDRTGGNCT. An N-linked (GlcNAc...) asparagine glycan is attached at N1529. The EGF-like 26; calcium-binding domain occupies 1532–1572; sequence DIDECADPINCVNGLCVNTPGRYECNCPPDFQLNPTGVGCV. Positions 1577 to 1633 constitute a TB 6 domain; it reads GNCYLKFGPRGDGSLSCNTEIGVGVSRSSCCCSLGKAWGNPCETCPPVNSTEYYTLC. The N-linked (GlcNAc...) asparagine glycan is linked to N1625. Residues 1650 to 1691 form the EGF-like 27; calcium-binding domain; sequence DIDECQELPGLCQGGNCINTFGSFQCECPQGYYLSEDTRICE. Cystine bridges form between C1654/C1666, C1661/C1675, C1677/C1690, C1696/C1708, C1703/C1717, and C1719/C1732. Residue S1672 is glycosylated (O-linked (Glc) serine). Residues 1692–1733 form the EGF-like 28; calcium-binding domain; that stretch reads DIDECFAHPGVCGPGTCYNTLGNYTCICPPEYMQVNGGHNCM. An N-linked (GlcNAc...) asparagine glycan is attached at N1714. An interaction with MFAP4 region spans residues 1735 to 2171; the sequence is MRKSFCYRSY…VPSLHDTRED (437 aa). In terms of domain architecture, TB 7 spans 1738 to 1791; the sequence is SFCYRSYNGTTCENELPFNVTKRMCCCTYNVGKAWNKPCEPCPTPGTADFKTIC. Residues N1745 and N1756 are each glycosylated (N-linked (GlcNAc...) asparagine). Positions 1808–1849 constitute an EGF-like 29; calcium-binding domain; sequence DIDECKEIPGICANGVCINQIGSFRCECPTGFSYNDLLLVCE. Cystine bridges form between C1812–C1824, C1819–C1833, C1835–C1848, C1854–C1867, C1861–C1876, C1878–C1890, C1896–C1908, C1903–C1917, C1919–C1932, C1938–C1948, C1943–C1957, C1959–C1971, C1977–C1990, C1985–C1999, C2001–C2014, C2020–C2032, C2027–C2041, C2043–C2054, C2060–C2072, C2067–C2081, and C2083–C2096. One can recognise an EGF-like 30; calcium-binding domain in the interval 1850–1891; the sequence is DIDECSNGDNLCQRNADCINSPGSYRCECAAGFKLSPNGACV. O-linked (Glc) serine glycosylation is present at S1873. An EGF-like 31; calcium-binding domain is found at 1892–1933; it reads DRNECLEIPNVCSHGLCVDLQGSYQCICHNGFKASQDQTMCM. The EGF-like 32; calcium-binding domain occupies 1934–1972; that stretch reads DVDECERHPCGNGTCKNTVGSYNCLCYPGFELTHNNDCL. The N-linked (GlcNAc...) asparagine glycan is linked to N1945. O-linked (Glc) serine glycosylation occurs at S1954. Residues 1973–2015 enclose the EGF-like 33; calcium-binding domain; that stretch reads DIDECSSFFGQVCRNGRCFNEIGSFKCLCNEGYELTPDGKNCI. O-linked (Glc) serine glycosylation occurs at S1996. An EGF-like 34; calcium-binding domain is found at 2016 to 2055; that stretch reads DTNECVALPGSCSPGTCQNLEGSFRCICPPGYEVKSENCI. An EGF-like 35; calcium-binding domain is found at 2056–2097; that stretch reads DINECDEDPNICLFGSCTNTPGGFQCLCPPGFVLSDNGRRCF. The region spanning 2102–2155 is the TB 8 domain; that stretch reads SFCFTNFENGKCSVPKAFNTTKAKCCCSKMPGEGWGDPCELCPKDDEVAFQDLC. N2120 carries N-linked (GlcNAc...) asparagine glycosylation. The 42-residue stretch at 2171-2212 folds into the EGF-like 36; calcium-binding domain; it reads DVNECLESPGICSNGQCINTDGSFRCECPMGYNLDYTGVRCV. 15 disulfide bridges follow: C2175–C2187, C2182–C2196, C2198–C2211, C2217–C2228, C2223–C2237, C2239–C2251, C2257–C2268, C2264–C2277, C2279–C2292, C2298–C2312, C2305–C2321, C2323–C2336, C2342–C2354, C2349–C2363, and C2365–C2378. An O-linked (Glc) serine glycan is attached at S2193. One can recognise an EGF-like 37; calcium-binding domain in the interval 2213–2252; that stretch reads DTDECSIGNPCGNGTCTNVIGSFECNCNEGFEPGPMMNCE. N2225 carries N-linked (GlcNAc...) asparagine glycosylation. The EGF-like 38; calcium-binding domain occupies 2253–2293; the sequence is DINECAQNPLLCAFRCMNTFGSYECTCPIGYALREDQKMCK. O-linked (Glc) serine glycosylation is present at S2274. An EGF-like 39; calcium-binding domain is found at 2294–2337; the sequence is DLDECAEGLHDCESRGMMCKNLIGTFMCICPPGMARRPDGEGCV. An EGF-like 40; calcium-binding domain is found at 2338 to 2379; the sequence is DENECRTKPGICENGRCVNIIGSYRCECNEGFQSSSSGTECL. A glycan (O-linked (Glc) serine) is linked at S2360. A TB 9 domain is found at 2384–2437; sequence GLCFAEVLQTICQMASSSRNLVTKSECCCDGGRGWGHQCELCPLPGTAQYKKIC. The EGF-like 41; calcium-binding domain occupies 2449-2490; the sequence is DIDECKVMPNLCTNGQCINTMGSFRCFCKVGYTTDISGTSCI. 21 disulfides stabilise this stretch: C2453–C2465, C2460–C2474, C2476–C2489, C2495–C2506, C2502–C2515, C2517–C2530, C2536–C2547, C2543–C2556, C2558–C2569, C2575–C2588, C2582–C2597, C2599–C2612, C2618–C2628, C2624–C2637, C2639–C2652, C2658–C2669, C2664–C2678, C2680–C2693, C2699–C2710, C2706–C2719, and C2721–C2733. S2471 carries O-linked (Glc) serine glycosylation. Residues 2491-2531 form the EGF-like 42; calcium-binding domain; the sequence is DLDECSQSPKPCNYICKNTEGSYQCSCPRGYVLQEDGKTCK. O-linked (Glc) serine glycosylation is present at S2512. Residues 2532-2570 form the EGF-like 43; calcium-binding domain; sequence DLDECQTKQHNCQFLCVNTLGGFTCKCPPGFTQHHTACI. Residues 2571-2613 enclose the EGF-like 44; calcium-binding domain; it reads DNNECGSQPSLCGAKGICQNTPGSFSCECQRGFSLDATGLNCE. The O-linked (Glc) serine glycan is linked to S2594. The EGF-like 45; calcium-binding domain occupies 2614 to 2653; sequence DVDECDGNHRCQHGCQNILGGYRCGCPQGYIQHYQWNQCV. One can recognise an EGF-like 46; calcium-binding domain in the interval 2654-2694; sequence DENECSNPNACGSASCYNTLGSYKCACPSGFSFDQFSSACH. S2675 carries O-linked (Glc) serine glycosylation. An EGF-like 47; calcium-binding domain is found at 2695 to 2734; that stretch reads DVNECSSSKNPCNYGCSNTEGGYLCGCPPGYYRVGQGHCV. N2808 is a glycosylation site (N-linked (GlcNAc...) asparagine).

Belongs to the fibrillin family. In terms of assembly, interacts with BMP2, BMP4, BMP7, BMP10 and GDF5. Interacts with MFAP2 and MFAP5. Interacts with ADAMTSL5. Interacts with MFAP4. Post-translationally, N-glycosylated. O-glycosylated on serine residues by POGLUT2 and POGLUT3. In terms of tissue distribution, almost exclusively expressed in placenta. Expressed at much lower level in other tissues. Expressed in fetal eye (18 weeks)in the retinal pigment epithelium (RPE), the choroid, Bruch's membrane and in the sclera. Not expressed in the neural retina. Present at high level in cytotrophoblasts as compared with syncytiotrophoblasts at 8-9 weeks of pregnancy (at protein level). Levels in the serum increase during pregnancy (at protein level).

It localises to the secreted. The protein localises to the extracellular space. Its subcellular location is the extracellular matrix. In terms of biological role, fibrillins are structural components of 10-12 nm extracellular calcium-binding microfibrils, which occur either in association with elastin or in elastin-free bundles. Fibrillin-2-containing microfibrils regulate the early process of elastic fiber assembly. Regulates osteoblast maturation by controlling TGF-beta bioavailability and calibrating TGF-beta and BMP levels, respectively. Hormone secreted by trophoblasts that promotes trophoblast invasiveness. Has glucogenic activity: is able to increase plasma glucose levels. The chain is Fibrillin-2 from Homo sapiens (Human).